We begin with the raw amino-acid sequence, 266 residues long: Large ribosomal subunit protein eL8 (266 aa).

Residues lysine 11, lysine 20, and lysine 21 each participate in a glycyl lysine isopeptide (Lys-Gly) (interchain with G-Cter in SUMO2) cross-link. An N6-acetyllysine modification is found at lysine 34. Lysine 48 participates in a covalent cross-link: Glycyl lysine isopeptide (Lys-Gly) (interchain with G-Cter in SUMO2). Lysine 97 bears the N6-acetyllysine; alternate mark. Residue lysine 97 forms a Glycyl lysine isopeptide (Lys-Gly) (interchain with G-Cter in SUMO2); alternate linkage. Lysine 125 participates in a covalent cross-link: Glycyl lysine isopeptide (Lys-Gly) (interchain with G-Cter in SUMO2). Lysine 217 is subject to N6-acetyllysine. Lysine 245 is covalently cross-linked (Glycyl lysine isopeptide (Lys-Gly) (interchain with G-Cter in SUMO2)).

Belongs to the eukaryotic ribosomal protein eL8 family. Component of the large ribosomal subunit. Interacts with CRY1. Interacts with DICER1, AGO2, TARBP2, MOV10 and EIF6; they form a large RNA-induced silencing complex (RISC).

It is found in the cytoplasm. Functionally, component of the large ribosomal subunit. The ribosome is a large ribonucleoprotein complex responsible for the synthesis of proteins in the cell. In Rattus norvegicus (Rat), this protein is Large ribosomal subunit protein eL8 (Rpl7a).